We begin with the raw amino-acid sequence, 210 residues long: Ribosomal RNA large subunit methyltransferase E (210 aa).

S-adenosyl-L-methionine-binding residues include glycine 60, tryptophan 62, aspartate 85, aspartate 101, and aspartate 126. The active-site Proton acceptor is lysine 166. Basic and acidic residues predominate over residues 191–200; that stretch reads KPKASRDKSS. Residues 191–210 form a disordered region; sequence KPKASRDKSSETFLVARDLK.

This sequence belongs to the class I-like SAM-binding methyltransferase superfamily. RNA methyltransferase RlmE family.

It localises to the cytoplasm. The enzyme catalyses uridine(2552) in 23S rRNA + S-adenosyl-L-methionine = 2'-O-methyluridine(2552) in 23S rRNA + S-adenosyl-L-homocysteine + H(+). Functionally, specifically methylates the uridine in position 2552 of 23S rRNA at the 2'-O position of the ribose in the fully assembled 50S ribosomal subunit. The polypeptide is Ribosomal RNA large subunit methyltransferase E (Bordetella bronchiseptica (strain ATCC BAA-588 / NCTC 13252 / RB50) (Alcaligenes bronchisepticus)).